Reading from the N-terminus, the 130-residue chain is Small ribosomal subunit protein uS9 (130 aa).

The protein belongs to the universal ribosomal protein uS9 family.

In Streptococcus equi subsp. equi (strain 4047), this protein is Small ribosomal subunit protein uS9.